A 55-amino-acid polypeptide reads, in one-letter code: Neurotoxin B-IV (55 aa).

The residue at position 10 (Pro10) is a Hydroxyproline. 4 disulfides stabilise this stretch: Cys12–Cys52, Cys16–Cys48, Cys23–Cys41, and Cys26–Cys37.

This sequence belongs to the worm B-toxin family.

Its subcellular location is the secreted. Functionally, this toxin increases the excitability of nerves by delaying the inactivation of the voltage-gated sodium channel (Nav). Only acts on some crustacean. Is more abundant, but 15-fold less toxic than neurotoxin B-II. In Cerebratulus lacteus (Milky ribbon worm), this protein is Neurotoxin B-IV.